Reading from the N-terminus, the 540-residue chain is Glucose-6-phosphate isomerase (540 aa).

Glutamate 346 serves as the catalytic Proton donor. Active-site residues include histidine 377 and lysine 505.

This sequence belongs to the GPI family.

The protein localises to the cytoplasm. The enzyme catalyses alpha-D-glucose 6-phosphate = beta-D-fructose 6-phosphate. Its pathway is carbohydrate biosynthesis; gluconeogenesis. It functions in the pathway carbohydrate degradation; glycolysis; D-glyceraldehyde 3-phosphate and glycerone phosphate from D-glucose: step 2/4. In terms of biological role, catalyzes the reversible isomerization of glucose-6-phosphate to fructose-6-phosphate. This chain is Glucose-6-phosphate isomerase, found in Francisella tularensis subsp. mediasiatica (strain FSC147).